The chain runs to 438 residues: Adenosylhomocysteinase (438 aa).

Substrate-binding residues include T64, D139, and E164. 165 to 167 (TTT) is an NAD(+) binding site. Substrate contacts are provided by K194 and D198. NAD(+)-binding positions include N199, 228 to 233 (GYGDVG), E251, N286, 307 to 309 (IGH), and N352.

Belongs to the adenosylhomocysteinase family. Requires NAD(+) as cofactor.

Its subcellular location is the cytoplasm. The catalysed reaction is S-adenosyl-L-homocysteine + H2O = L-homocysteine + adenosine. Its pathway is amino-acid biosynthesis; L-homocysteine biosynthesis; L-homocysteine from S-adenosyl-L-homocysteine: step 1/1. Functionally, may play a key role in the regulation of the intracellular concentration of adenosylhomocysteine. The chain is Adenosylhomocysteinase from Coxiella burnetii (strain RSA 493 / Nine Mile phase I).